The sequence spans 473 residues: Ribosomal RNA small subunit methyltransferase F (473 aa).

S-adenosyl-L-methionine-binding positions include 124–130 (ASAPGSK), Glu-148, Asp-175, and Asp-193. Cys-246 acts as the Nucleophile in catalysis.

The protein belongs to the class I-like SAM-binding methyltransferase superfamily. RsmB/NOP family.

It localises to the cytoplasm. It carries out the reaction cytidine(1407) in 16S rRNA + S-adenosyl-L-methionine = 5-methylcytidine(1407) in 16S rRNA + S-adenosyl-L-homocysteine + H(+). Its function is as follows. Specifically methylates the cytosine at position 1407 (m5C1407) of 16S rRNA. This is Ribosomal RNA small subunit methyltransferase F from Aliivibrio fischeri (strain MJ11) (Vibrio fischeri).